An 87-amino-acid polypeptide reads, in one-letter code: Small ribosomal subunit protein bS20 (87 aa).

The disordered stretch occupies residues 1–22; sequence MANSAQARKRARQAVKQRAHNA. The segment covering 7–19 has biased composition (basic residues); the sequence is ARKRARQAVKQRA.

The protein belongs to the bacterial ribosomal protein bS20 family.

Binds directly to 16S ribosomal RNA. The sequence is that of Small ribosomal subunit protein bS20 from Methylobacillus flagellatus (strain ATCC 51484 / DSM 6875 / VKM B-1610 / KT).